The following is a 353-amino-acid chain: MEEISARLNAVQEKILDLYEADKTDLPSQIEHWKLIRMECALLYTAKQMGFSHLCHQVVPSLLASKTKAFQVIELQMALETLSKSQYSTSQWTLQQTSLEVWLCEPPKCFKKQGETVTVQYDNDKKNTMDYTNWGEIYIIEEDTCTMVTGKVDYIGMYYIHNCEKVYFKYFKEDAAKYSKTQMWEVHVGGQVIVCPTSISSNQISTTETADIQTDNDNRPPQAAAKRRRPADTTDTAQPLTKLFCADPALDNRTARTATNCTNKQRTVCSSNVAPIVHLKGESNSLKCLRYRLKPYKELYSSMSSTWHWTSDNKNSKNGIVTVTFVTEQQQQMFLGTVKIPPTVQISTGFMTL.

The interval 1-200 is transactivation domain; that stretch reads MEEISARLNA…QVIVCPTSIS (200 aa). The segment covering 206 to 215 has biased composition (polar residues); the sequence is TTETADIQTD. The segment at 206–234 is disordered; sequence TTETADIQTDNDNRPPQAAAKRRRPADTT. The segment at 273-353 is DNA-binding domain; the sequence is VAPIVHLKGE…VQISTGFMTL (81 aa). Lysine 280 participates in a covalent cross-link: Glycyl lysine isopeptide (Lys-Gly) (interchain with G-Cter in SUMO).

This sequence belongs to the papillomaviridae E2 protein family. Binds DNA as homodimer. Interacts with protein E1; this interaction greatly increases E1 DNA-binding activity. Interacts with protein L1; this interaction enhances E2-dependent replication and transcription activation. Interacts with protein L2; this interaction inhibits E2 transcriptional activity but not DNA replication function E2. Interacts with protein E7; this interaction inhibits E7 oncogenic activity. Interacts with host TAF1; this interaction modulates E2-dependent transcriptional regulation. Interacts with host BRD4; this interaction mediates E2 transcriptional activation function. Additionally, the interaction with host BRD4 on mitotic chromosomes mediates tethering of the viral genome. Interacts with host TOPBP1; this interaction is required for optimal viral DNA replication. Post-translationally, phosphorylated. Sumoylation plays a regulatory role in E2 transcriptional activity.

Its subcellular location is the host nucleus. Functionally, plays a role in the initiation of viral DNA replication. A dimer of E2 interacts with a dimer of E1 in order to improve specificity of E1 DNA binding activity. Once the complex recognizes and binds DNA at specific sites, the E2 dimer is removed from DNA. E2 also regulates viral transcription through binding to the E2RE response element (5'-ACCNNNNNNGGT-3') present in multiple copies in the regulatory regions of the viral genome. Activates or represses transcription depending on E2RE's position with regards to proximal promoter elements including the TATA-box. Repression occurs by sterically hindering the assembly of the transcription initiation complex. The sequence is that of Regulatory protein E2 from Homo sapiens (Human).